A 495-amino-acid chain; its full sequence is NAD(+)--protein-arginine ADP-ribosyltransferase Tre1 (495 aa).

Positions Pro-278–Val-309 are disordered. In terms of domain architecture, TR mART core spans Met-315–Pro-495. The interval Arg-344 to Pro-495 is ART domain. Active-site residues include Arg-406, Ser-431, and Glu-466.

It belongs to the Arg-specific ADP-ribosyltransferase family.

The protein localises to the secreted. It localises to the host cytoplasm. The catalysed reaction is L-arginyl-[protein] + NAD(+) = N(omega)-(ADP-D-ribosyl)-L-arginyl-[protein] + nicotinamide + H(+). Its function is as follows. Toxic component of a contact-dependent interbacterial competition system (also called effector-immunity systems). Acts by ADP-ribosylating a number of target proteins in target cells; E.coli target proteins include FtsZ, EFTu, RNase E, Fis, YegQ, GuaB and IF2. This is NAD(+)--protein-arginine ADP-ribosyltransferase Tre1 from Pseudomonas putida (strain GB-1).